The sequence spans 314 residues: 4-hydroxy-3-methylbut-2-enyl diphosphate reductase (314 aa).

Residue cysteine 12 participates in [4Fe-4S] cluster binding. (2E)-4-hydroxy-3-methylbut-2-enyl diphosphate-binding residues include histidine 41 and histidine 74. Dimethylallyl diphosphate is bound by residues histidine 41 and histidine 74. Residues histidine 41 and histidine 74 each coordinate isopentenyl diphosphate. Cysteine 96 contacts [4Fe-4S] cluster. Residue histidine 124 participates in (2E)-4-hydroxy-3-methylbut-2-enyl diphosphate binding. Histidine 124 is a dimethylallyl diphosphate binding site. Histidine 124 serves as a coordination point for isopentenyl diphosphate. The active-site Proton donor is the glutamate 126. Threonine 168 contacts (2E)-4-hydroxy-3-methylbut-2-enyl diphosphate. Position 198 (cysteine 198) interacts with [4Fe-4S] cluster. (2E)-4-hydroxy-3-methylbut-2-enyl diphosphate is bound by residues serine 226, serine 227, asparagine 228, and serine 270. The dimethylallyl diphosphate site is built by serine 226, serine 227, asparagine 228, and serine 270. Isopentenyl diphosphate is bound by residues serine 226, serine 227, asparagine 228, and serine 270.

The protein belongs to the IspH family. [4Fe-4S] cluster is required as a cofactor.

The catalysed reaction is isopentenyl diphosphate + 2 oxidized [2Fe-2S]-[ferredoxin] + H2O = (2E)-4-hydroxy-3-methylbut-2-enyl diphosphate + 2 reduced [2Fe-2S]-[ferredoxin] + 2 H(+). It catalyses the reaction dimethylallyl diphosphate + 2 oxidized [2Fe-2S]-[ferredoxin] + H2O = (2E)-4-hydroxy-3-methylbut-2-enyl diphosphate + 2 reduced [2Fe-2S]-[ferredoxin] + 2 H(+). The protein operates within isoprenoid biosynthesis; dimethylallyl diphosphate biosynthesis; dimethylallyl diphosphate from (2E)-4-hydroxy-3-methylbutenyl diphosphate: step 1/1. It participates in isoprenoid biosynthesis; isopentenyl diphosphate biosynthesis via DXP pathway; isopentenyl diphosphate from 1-deoxy-D-xylulose 5-phosphate: step 6/6. Its function is as follows. Catalyzes the conversion of 1-hydroxy-2-methyl-2-(E)-butenyl 4-diphosphate (HMBPP) into a mixture of isopentenyl diphosphate (IPP) and dimethylallyl diphosphate (DMAPP). Acts in the terminal step of the DOXP/MEP pathway for isoprenoid precursor biosynthesis. This Ectopseudomonas mendocina (strain ymp) (Pseudomonas mendocina) protein is 4-hydroxy-3-methylbut-2-enyl diphosphate reductase.